Reading from the N-terminus, the 95-residue chain is Protein TusB (95 aa).

The protein belongs to the DsrH/TusB family. In terms of assembly, heterohexamer, formed by a dimer of trimers. The hexameric TusBCD complex contains 2 copies each of TusB, TusC and TusD. The TusBCD complex interacts with TusE.

Its subcellular location is the cytoplasm. Its function is as follows. Part of a sulfur-relay system required for 2-thiolation of 5-methylaminomethyl-2-thiouridine (mnm(5)s(2)U) at tRNA wobble positions. The protein is Protein TusB of Escherichia coli (strain SMS-3-5 / SECEC).